We begin with the raw amino-acid sequence, 1108 residues long: Transmembrane protein 132C (1108 aa).

Residues 1 to 27 (MRSEGAAPGPAAPLCGALSLLLGALLG) form the signal peptide. Topologically, residues 28-922 (KVIEGHGVTD…LVQTPRGLSD (895 aa)) are extracellular. N-linked (GlcNAc...) asparagine glycans are attached at residues Asn316 and Asn373. Over residues 820–836 (HASDRRQKGQHHERTGQ) the composition is skewed to basic and acidic residues. The interval 820-857 (HASDRRQKGQHHERTGQDGHLYGSSPVEREEGALRRAT) is disordered. A helical membrane pass occupies residues 923–943 (LEIGMYALLGVFCLAILVFLI). Over 944–1108 (NCATFALKYR…NYLEKLKDKA (165 aa)) the chain is Cytoplasmic. Residues 1022–1072 (QSQIHRSADSGGRQGREQKQDPLHSPTSKRKKVKFTTFTTIPPDDSCPTVN) are disordered.

Belongs to the TMEM132 family.

It is found in the membrane. This Homo sapiens (Human) protein is Transmembrane protein 132C (TMEM132C).